A 362-amino-acid chain; its full sequence is Solute carrier family 25 member 3 (362 aa).

The N-terminal 49 residues, 1–49 (MFSSVAHLARANPFNTPHLQLVHDGLGDLRSSSPGPTGQPRRPRNLAAA), are a transit peptide targeting the mitochondrion. Residues 50-63 (AVEEQYSCDYGSGR) are Mitochondrial intermembrane-facing. Solcar repeat units follow at residues 63 to 147 (RFFI…FKVL), 160 to 244 (WRTS…TVEA), and 261 to 339 (EQLV…VKVY). A helical membrane pass occupies residues 64 to 86 (FFILCGLGGIISCGTTHTALVPL). Over 87–121 (DLVKCRMQVDPQKYKGIFNGFSVTLKEDGVRGLAK) the chain is Mitochondrial matrix. Lysine 99 carries the N6-acetyllysine modification. Lysine 112 carries the post-translational modification N6-methyllysine. A helical transmembrane segment spans residues 122–141 (GWAPTFLGYSMQGLCKFGFY). The Mitochondrial intermembrane portion of the chain corresponds to 142–161 (EVFKVLYSNMLGEENTYLWR). A helical membrane pass occupies residues 162–183 (TSLYLAASASAEFFADIALAPM). Over 184-218 (EAAKVRIQTQPGYANTLRDAAPKMYKEEGLKAFYK) the chain is Mitochondrial matrix. At tyrosine 196 the chain carries Phosphotyrosine. At lysine 209 the chain carries N6-acetyllysine. Residues 219 to 238 (GVAPLWMRQIPYTMMKFACF) traverse the membrane as a helical segment. Over 239 to 261 (ERTVEALYKFVVPKPRSECSKPE) the chain is Mitochondrial intermembrane. Residues 262-284 (QLVVTFVAGYIAGVFCAIVSHPA) form a helical membrane-spanning segment. Residues 285 to 314 (DSVVSVLNKEKGSSASLVLKRLGFKGVWKG) lie on the Mitochondrial matrix side of the membrane. A helical transmembrane segment spans residues 315-333 (LFARIIMIGTLTALQWFIY). The Mitochondrial intermembrane portion of the chain corresponds to 334-362 (DSVKVYFRLPRPPPPEMPESLKKKLGLTQ).

This sequence belongs to the mitochondrial carrier (TC 2.A.29) family. As to quaternary structure, interacts with PPIF; the interaction is impaired by CsA.

The protein resides in the mitochondrion inner membrane. The enzyme catalyses phosphate(in) + H(+)(in) = phosphate(out) + H(+)(out). Functionally, inorganic ion transporter that transports phosphate or copper ions across the mitochondrial inner membrane into the matrix compartment. Mediates proton-coupled symport of phosphate ions necessary for mitochondrial oxidative phosphorylation of ADP to ATP. Transports copper ions probably in the form of anionic copper(I) complexes to maintain mitochondrial matrix copper pool and to supply copper for cytochrome C oxidase complex assembly. May also play a role in regulation of the mitochondrial permeability transition pore (mPTP). The chain is Solute carrier family 25 member 3 from Homo sapiens (Human).